Reading from the N-terminus, the 982-residue chain is Zinc finger and BTB domain-containing protein 4 (982 aa).

The region spanning 30–131 is the BTB domain; that stretch reads CDVTLIAGDT…IYSARLALPG (102 aa). Lysine 40 is covalently cross-linked (Glycyl lysine isopeptide (Lys-Gly) (interchain with G-Cter in SUMO2)). Residues 71-103 are disordered; it reads TGGSAPSPATTTAASSSSSSPPPASPHSSSPPR. Over residues 74–89 the composition is skewed to low complexity; sequence SAPSPATTTAASSSSS. The interaction with CBFA2T3 stretch occupies residues 165–324; that stretch reads VPPAPTSMVT…CRYCEKVFAL (160 aa). Residues 210–232 form a C2H2-type 1; atypical zinc finger; that stretch reads FPCPRCGKSFIHPKRLQTHEAQC. Residues 234–255 are disordered; the sequence is RGSNTRGSAGLGPGVSGSGGPA. The span at 242-255 shows a compositional bias: gly residues; it reads AGLGPGVSGSGGPA. 3 C2H2-type zinc fingers span residues 285–307, 313–335, and 341–364; these read YVCA…SNVH, YPCR…EVWH, and YQCI…RAFH. Residue serine 367 is modified to Phosphoserine. Residues 404-578 are disordered; it reads KTYSQGAPEA…QLQAPPPLCQ (175 aa). Residues 430–446 are compositionally biased toward pro residues; that stretch reads SPQPLPPPAPEPGPPPS. Over residues 467 to 477 the composition is skewed to gly residues; it reads AAGGGPAGTGG. Low complexity-rich tracts occupy residues 478-488 and 507-529; these read SQAASVITYTT and ATPT…ATAT. Lysine 548 participates in a covalent cross-link: Glycyl lysine isopeptide (Lys-Gly) (interchain with G-Cter in SUMO2). Residues 552–565 are compositionally biased toward gly residues; it reads GLSGSGGSPTGTGR. Residue lysine 590 forms a Glycyl lysine isopeptide (Lys-Gly) (interchain with G-Cter in SUMO2) linkage. Residues 591–600 show a composition bias toward basic and acidic residues; sequence RRISETDLRP. Disordered regions lie at residues 591–700, 715–738, 759–839, and 854–880; these read RRIS…ERRH, LRKH…SSTR, QRHA…GGGS, and GGSR…GDRM. Residues 604–627 are compositionally biased toward acidic residues; that stretch reads SGEEVEESEEEEEEEEEEDQEEQE. The segment covering 628-637 has biased composition (basic and acidic residues); it reads ESKAGGEDQL. 2 C2H2-type zinc fingers span residues 700–722 and 739–761; these read HRCG…QEAH and FTCP…GQRH. Phosphothreonine; by HIPK2 is present on residues threonine 769 and threonine 771. Residues 799–820 show a composition bias toward low complexity; sequence SSSSGEAGSGSAAAAEASESAS. Threonine 953 is subject to Phosphothreonine; by HIPK2.

As to quaternary structure, interacts with HIPK2. Interacts with CBFA2T3. Interacts with ZBTB38. Phosphorylated by HIPK2. This phosphorylation reduces stability and triggers ZBTB4 protein degradation in response to DNA damage. In terms of tissue distribution, expressed in adult and aged myogenic satellite cells.

The protein localises to the nucleus. It is found in the chromosome. Its function is as follows. Transcriptional repressor with bimodal DNA-binding specificity. Represses transcription in a methyl-CpG-dependent manner. Binds with a higher affinity to methylated CpG dinucleotides in the consensus sequence 5'-CGCG-3' but can also bind to the non-methylated consensus sequence 5'-CTGCNA-3' also known as the consensus kaiso binding site (KBS). Can also bind specifically to a single methyl-CpG pair and can bind hemimethylated DNA but with a lower affinity compared to methylated DNA. Plays a role in postnatal myogenesis, may be involved in the regulation of satellite cells self-renewal. In Mus musculus (Mouse), this protein is Zinc finger and BTB domain-containing protein 4 (Zbtb4).